The primary structure comprises 487 residues: ATP synthase subunit beta, plastid (487 aa).

ATP is bound at residue 169–176 (GGAGVGKT).

Belongs to the ATPase alpha/beta chains family. In terms of assembly, F-type ATPases have 2 components, CF(1) - the catalytic core - and CF(0) - the membrane proton channel. CF(1) has five subunits: alpha(3), beta(3), gamma(1), delta(1), epsilon(1). CF(0) has four main subunits: a(1), b(1), b'(1) and c(9-12).

The protein resides in the plastid membrane. The enzyme catalyses ATP + H2O + 4 H(+)(in) = ADP + phosphate + 5 H(+)(out). Functionally, produces ATP from ADP in the presence of a proton gradient across the membrane. The catalytic sites are hosted primarily by the beta subunits. The polypeptide is ATP synthase subunit beta, plastid (atpB) (Cuscuta pentagona (Five-angled dodder)).